Reading from the N-terminus, the 123-residue chain is Angiogenin-2 (123 aa).

At Gln1 the chain carries Pyrrolidone carboxylic acid. The active-site Proton acceptor is His12. Disulfide bonds link Cys25–Cys80, Cys38–Cys91, and Cys56–Cys106. Residues 30 to 34 (ERRNM) carry the Nucleolar localization signal motif. Asn33 carries N-linked (GlcNAc...) asparagine glycosylation. Zn(2+) contacts are provided by Asp40, His82, and His113. The active-site Proton donor is the His113.

Belongs to the pancreatic ribonuclease family. Serum and milk.

It is found in the cytoplasmic vesicle. The protein localises to the secretory vesicle lumen. The protein resides in the secreted. Its subcellular location is the nucleus. It localises to the nucleolus. Its activity is regulated as follows. Divalent metal ions, such as Cu2+ and Zn2+, may inhibit the ribonucleolytic activity. Its function is as follows. Binds tightly to placental ribonuclease inhibitor and has very low ribonuclease activity. Has potent angiogenic activity. Angiogenin induces vascularization of normal and malignant tissues. Abolishes protein synthesis by specifically hydrolyzing cellular tRNAs. The chain is Angiogenin-2 from Bos taurus (Bovine).